Reading from the N-terminus, the 82-residue chain is Putative defensin-like protein 134 (82 aa).

The first 26 residues, 1–26 (MEVRSLNLCFLLVLVLLMSPAPTAVA), serve as a signal peptide directing secretion. 4 disulfides stabilise this stretch: Cys-32–Cys-79, Cys-42–Cys-68, Cys-47–Cys-74, and Cys-51–Cys-76.

The protein belongs to the DEFL family.

Its subcellular location is the secreted. This is Putative defensin-like protein 134 from Arabidopsis thaliana (Mouse-ear cress).